Here is a 380-residue protein sequence, read N- to C-terminus: Gonadotropin-releasing hormone II receptor (380 aa).

Residues 1 to 40 (MSAVNGTPWGSSAREEVWAGSGVEVEGSELPTFSTAAKVR) are Extracellular-facing. Residues 41–60 (VGVTIVLFVSSAGGNLAVLW) form a helical membrane-spanning segment. Topologically, residues 61-76 (SVTRPQPSQLRPSPVR) are cytoplasmic. The helical transmembrane segment at 77–96 (RLFAHLAAADLLVTFVVMPL) threads the bilayer. Topologically, residues 97 to 114 (DATWNITVQWLAGDIACR) are extracellular. N101 is a glycosylation site (N-linked (GlcNAc...) asparagine). C113 and C188 are oxidised to a cystine. A helical transmembrane segment spans residues 115–136 (TLMFLKLMAMYAAAFLPVVIGL). The Cytoplasmic segment spans residues 137-160 (DRQAAVLNPLGSRSGVRKLLGAAW). Residues 161-178 (GLSFLLALPQLFLFHTVH) traverse the membrane as a helical segment. Over 179–204 (RAGPVPFTQCATKGSFKARWQETTYN) the chain is Extracellular. Residues 205–224 (LFTFCCLFLLPLTAMAICYS) traverse the membrane as a helical segment. The Cytoplasmic portion of the chain corresponds to 225 to 278 (RIVLGVSSPRTRKGSHAPAGEFALRRSFDNRPRVRLRALRLALLVLLTFILCWT). The helical transmembrane segment at 279–297 (PYYLLGLWYWFSPSMLSEV) threads the bilayer. Residues 298–303 (PPSLSH) lie on the Extracellular side of the membrane. Residues 304 to 323 (ILFLFGLLNAPLDPLLYGAF) form a helical membrane-spanning segment. Residues 324–380 (TLGCRRGHQELSMDSSREEGSRRMFQQDIQALRQTEVQKTVTSRKAGETKDIPITSI) are Cytoplasmic-facing.

The protein belongs to the G-protein coupled receptor 1 family. In terms of processing, phosphorylated on the C-terminal cytoplasmic tail.

The protein resides in the cell membrane. In terms of biological role, receptor for gonadotropin releasing hormone II (GnRH II). This receptor mediates its action by association with G proteins that activate a phosphatidylinositol-calcium second messenger system. The chain is Gonadotropin-releasing hormone II receptor (GNRHR2) from Callithrix jacchus (White-tufted-ear marmoset).